The primary structure comprises 152 residues: Large ribosomal subunit protein uL24 (152 aa).

Positions Val-128–Lys-152 are disordered.

The protein belongs to the universal ribosomal protein uL24 family. In terms of assembly, part of the 50S ribosomal subunit.

Its function is as follows. One of two assembly initiator proteins, it binds directly to the 5'-end of the 23S rRNA, where it nucleates assembly of the 50S subunit. Functionally, located at the polypeptide exit tunnel on the outside of the subunit. The protein is Large ribosomal subunit protein uL24 of Staphylothermus marinus (strain ATCC 43588 / DSM 3639 / JCM 9404 / F1).